Consider the following 62-residue polypeptide: DNA-binding protein 7 (62 aa).

Belongs to the 7 kDa DNA-binding/endoribonuclease P2 family. Monomer.

Its subcellular location is the cytoplasm. Can constrain negative DNA supercoils. May be involved in maintaining the integrity of the genome at high temperature. This Metallosphaera cuprina (strain Ar-4) protein is DNA-binding protein 7.